The following is a 289-amino-acid chain: Transmembrane protein 163 (289 aa).

The segment at 1–65 is disordered; the sequence is MEPAAGIQRR…ESGQFSDGLE (65 aa). At 1 to 88 the chain is on the cytoplasmic side; that stretch reads MEPAAGIQRR…HEAQNYRKKA (88 aa). Phosphoserine is present on Ser11. Over residues 16–36 the composition is skewed to pro residues; that stretch reads TVPPPPRGHAPPAAAPGPAPL. The tract at residues 42–72 is required for interaction with MCOLN1; the sequence is EPPQLEEERQVRISESGQFSDGLEDRGLLES. Phosphoserine is present on residues Ser55, Ser57, and Ser61. A helical membrane pass occupies residues 89 to 109; the sequence is LWVSWFSIIVTLALAVAAFTV. Residues 110-116 are Extracellular-facing; the sequence is SVMRYSA. The helical transmembrane segment at 117 to 137 threads the bilayer; it reads SAFGFAFDAILDVLSSAIVLW. Residues 138 to 150 are Cytoplasmic-facing; that stretch reads RYSNAAAVHSAHR. A helical membrane pass occupies residues 151–171; sequence EYIACVILGVIFLLSSICIVV. Topologically, residues 172–187 are extracellular; it reads KAIHDLSTRLLPEVDD. Residues 188–208 form a helical membrane-spanning segment; sequence FLFSVSILSGILCSILAVLKF. The Cytoplasmic portion of the chain corresponds to 209 to 217; it reads MLGKVLTSR. The chain crosses the membrane as a helical span at residues 218–238; that stretch reads ALITDGFNSLVGGVMGFSILL. Topologically, residues 239 to 255 are extracellular; that stretch reads SAEVFKHDSAVWYLDGS. The chain crosses the membrane as a helical span at residues 256 to 276; that stretch reads IGVLIGLTIFAYGVKLLIDMV. Topologically, residues 277–289 are cytoplasmic; sequence PRVRQTRHYEMFE.

This sequence belongs to the TMEM163 family. Homodimer. Interacts with MCOLN1/TRPML1. Interacts with SLC30A1, SLC30A2, SLC30A3 and SLC30A4. In terms of tissue distribution, widely expressed. High expression is detected in brain, lung and testis.

The protein resides in the cytoplasmic vesicle. Its subcellular location is the secretory vesicle. It localises to the synaptic vesicle membrane. The protein localises to the early endosome membrane. It is found in the late endosome membrane. The protein resides in the lysosome membrane. Its subcellular location is the cell membrane. The enzyme catalyses Zn(2+)(in) = Zn(2+)(out). Its function is as follows. Zinc ion transporter that mediates zinc efflux and plays a crucial role in intracellular zinc homeostasis. Binds the divalent cations Zn(2+), Ni(2+), and to a minor extent Cu(2+). Is a functional modulator of P2X purinoceptors, including P2RX1, P2RX3, P2RX4 and P2RX7. Plays a role in central nervous system development and is required for myelination, and survival and proliferation of oligodendrocytes. This chain is Transmembrane protein 163 (TMEM163), found in Homo sapiens (Human).